The chain runs to 431 residues: 23S rRNA (uracil(1939)-C(5))-methyltransferase RlmD (431 aa).

Residues Arg10–Arg68 enclose the TRAM domain. Residues Cys81, Cys87, Cys90, and Cys161 each coordinate [4Fe-4S] cluster. Residues Gln264, Phe293, Asn298, Glu314, Asn341, and Asp362 each coordinate S-adenosyl-L-methionine. Residue Cys388 is the Nucleophile of the active site.

Belongs to the class I-like SAM-binding methyltransferase superfamily. RNA M5U methyltransferase family. RlmD subfamily.

It catalyses the reaction uridine(1939) in 23S rRNA + S-adenosyl-L-methionine = 5-methyluridine(1939) in 23S rRNA + S-adenosyl-L-homocysteine + H(+). Functionally, catalyzes the formation of 5-methyl-uridine at position 1939 (m5U1939) in 23S rRNA. In Salmonella choleraesuis (strain SC-B67), this protein is 23S rRNA (uracil(1939)-C(5))-methyltransferase RlmD.